Consider the following 425-residue polypeptide: Inositol hexakisphosphate kinase 2 (425 aa).

Residues 206 to 208 (ENL) and D219 contribute to the ATP site. Substrate contacts are provided by residues 215–223 (PCVLDLKMG), K221, and 235–242 (KAANQIRK). Position 382 (D382) interacts with ATP. Substrate is bound at residue H385.

Belongs to the inositol phosphokinase (IPK) family. As to expression, highly expressed in small intestine.

The protein resides in the nucleus. The enzyme catalyses 1D-myo-inositol hexakisphosphate + ATP = 5-diphospho-1D-myo-inositol 1,2,3,4,6-pentakisphosphate + ADP. It participates in phospholipid metabolism; phosphatidylinositol metabolism. Functionally, converts inositol hexakisphosphate (InsP6) to diphosphoinositol pentakisphosphate (InsP7/PP-InsP5). The protein is Inositol hexakisphosphate kinase 2 (Ip6k2) of Rattus norvegicus (Rat).